The primary structure comprises 124 residues: uncharacterized protein (124 aa).

This is an uncharacterized protein from Lactobacillus acidophilus.